We begin with the raw amino-acid sequence, 574 residues long: Squalene monooxygenase (574 aa).

Over 1–20 (MWTFLGIATFTYFYKKFGDF) the chain is Cytoplasmic. Positions 1-100 (MWTFLGIATF…EQLEARRRRK (100 aa)) are interaction with MARCHF6. The stretch at 21–41 (ITLANREVLLCVLVFLSLGLV) is an intramembrane region. The Cytoplasmic segment spans residues 42–574 (LSYRCRHRNG…IYSEMKYMVH (533 aa)). The required for degradation in response to high membrane cholesterol levels stretch occupies residues 62-73 (QFALFSDILSGL). Positions 118-574 (TSSQNDPEVI…IYSEMKYMVH (457 aa)) are sufficient for enzyme activity. Residues 133–134 (VL), 153–154 (ER), Arg161, Phe166, Arg234, Val250, Asp408, and Met421 contribute to the FAD site. The tract at residues 516 to 574 (PLVLIGHFFAVAIYAVYFCFKSEPWITKPRALLSSGAVLYKACSVIFPLIYSEMKYMVH) is hydrophobic; mediates interaction with membranes.

It belongs to the squalene monooxygenase family. Interacts (via N-terminal domain) with MARCHF6. Interacts with SMIM22; this interaction modulates lipid droplet formation. It depends on FAD as a cofactor. Ubiquitinated by MARCHF6 in response to high cholesterol levels in intracellular membranes, leading to proteasomal degradation. In terms of tissue distribution, detected in liver (at protein level).

The protein resides in the microsome membrane. Its subcellular location is the endoplasmic reticulum membrane. The enzyme catalyses squalene + reduced [NADPH--hemoprotein reductase] + O2 = (S)-2,3-epoxysqualene + oxidized [NADPH--hemoprotein reductase] + H2O + H(+). Its pathway is terpene metabolism; lanosterol biosynthesis; lanosterol from farnesyl diphosphate: step 2/3. Its activity is regulated as follows. Inhibited by NB-598 ((E)N-ethyl-N-(6,6-dimethyl-2-hepten-4-ynyl)-3-[(3,3'-bi-thiophen-5-yl)methoxy]benzene-methanamine). Contrary to fungal enzymes, the mammalian enzyme is only slightly inhibited by terbinafine. Inhibited by tellurite, tellurium dioxide, selenite, and selenium dioxide. Its function is as follows. Catalyzes the stereospecific oxidation of squalene to (S)-2,3-epoxysqualene, and is considered to be a rate-limiting enzyme in steroid biosynthesis. This is Squalene monooxygenase (SQLE) from Homo sapiens (Human).